Here is a 294-residue protein sequence, read N- to C-terminus: Keratin-like protein KRT222 (294 aa).

In terms of domain architecture, IF rod spans 1–150 (MELSQLLNEI…RLLEQEEIRY (150 aa)). Residues 1–151 (MELSQLLNEI…LLEQEEIRYY (151 aa)) are a coiled coil.

This sequence belongs to the intermediate filament family.

This chain is Keratin-like protein KRT222 (Krt222), found in Mus musculus (Mouse).